Here is a 110-residue protein sequence, read N- to C-terminus: Movement protein TGB2 (110 aa).

The Cytoplasmic portion of the chain corresponds to Met1–Pro10. Residues Thr11–Thr34 traverse the membrane as a helical segment. Residues Arg35–Pro76 lie on the Lumenal side of the membrane. The chain crosses the membrane as a helical span at residues Phe77–Leu92. Residues Ser93–Ala110 lie on the Cytoplasmic side of the membrane.

Belongs to the Tymovirales TGBp2 protein family.

It localises to the host endoplasmic reticulum membrane. In terms of biological role, plays a role in viral cell-to-cell propagation, by facilitating genome transport to neighboring plant cells through plasmosdesmata,. The polypeptide is Movement protein TGB2 (Plantago asiatica (P1AMV)).